The following is a 323-amino-acid chain: Phosphatidylethanolamine:ceramide ethanolaminephosphotransferase (323 aa).

The Cytoplasmic segment spans residues M1–Q26. Residues V27 to I47 form a helical membrane-spanning segment. Residues T48–P73 are Extracellular-facing. Residues F74–A94 traverse the membrane as a helical segment. The Cytoplasmic segment spans residues F95–R147. Residues F148 to L168 form a helical membrane-spanning segment. At P169 to T211 the chain is on the extracellular side. The active site involves H210. A helical membrane pass occupies residues V212–F232. R233 is a topological domain (cytoplasmic). A helical transmembrane segment spans residues P234 to Y254. Residues H253 and D257 contribute to the active site. At T255–D257 the chain is on the extracellular side. The helical transmembrane segment at V258–G278 threads the bilayer. Over A279–S323 the chain is Cytoplasmic.

It belongs to the sphingomyelin synthase family.

The protein resides in the membrane. Functionally, bidirectional lipid ethanolaminephosphotransferase capable of converting phosphatidylethanolamine (PE) and ceramide to ethanolamine-phosphorylceramide (EPC) and diacylglycerol (DAG) and vice versa. Direction is dependent on the relative concentrations of DAG and ceramide as phosphoethanolamine acceptors. Does not function strictly as a SM synthase. Essential for viability of the pathogenic bloodstream stage of this human protozoan parasite and, consequently, can be considered as potential drug target. The polypeptide is Phosphatidylethanolamine:ceramide ethanolaminephosphotransferase (Trypanosoma brucei brucei (strain 927/4 GUTat10.1)).